Reading from the N-terminus, the 318-residue chain is MEWENHTILVEFFLKGLSGHPRLELLFFVLIFIMYVVILLGNGTLILISILDPHLHTPMYFFLGNLSFLDICYTTTSIPSTLVSFLSERKTISLSGCAVQMFLGLAMGTTECVLLGMMAFDRYVAICNPLRYPIIMSKDAYVPMAAGSWIIGAVNSAVQSVFVVQLPFCRNNIINHFTCEILAVMKLACADISDNEFIMLVATTLFILTPLLLIIVSYTLIIVSIFKISSSEGRSKASSTCSAHLTVVIIFYGTILFMYMKPKSKETLNSDDLDATDKIISMFYGVMTPMMNPLIYSLRNKDVKEAVKHLLNRRFFSK.

Residues Met1–Leu25 lie on the Extracellular side of the membrane. An N-linked (GlcNAc...) asparagine glycan is attached at Asn5. A helical transmembrane segment spans residues Leu26–Ile46. Residues Leu47–His54 are Cytoplasmic-facing. Residues Leu55–Thr75 form a helical membrane-spanning segment. Over Thr76–Val99 the chain is Extracellular. An intrachain disulfide couples Cys97 to Cys189. A helical membrane pass occupies residues Gln100–Phe120. Over Asp121–Asp139 the chain is Cytoplasmic. A helical membrane pass occupies residues Ala140–Ser160. At Val161–Phe197 the chain is on the extracellular side. Residues Ile198–Ser217 form a helical membrane-spanning segment. The Cytoplasmic segment spans residues Tyr218–Ala237. Residues Ser238–Met258 traverse the membrane as a helical segment. The Extracellular segment spans residues Tyr259–Asp277. A helical membrane pass occupies residues Lys278–Leu298. Residues Arg299–Lys318 lie on the Cytoplasmic side of the membrane.

The protein belongs to the G-protein coupled receptor 1 family.

It localises to the cell membrane. In terms of biological role, odorant receptor. The chain is Olfactory receptor 13C2 (OR13C2) from Homo sapiens (Human).